A 793-amino-acid polypeptide reads, in one-letter code: Protein zer-1 homolog (793 aa).

3 LRR repeats span residues 84–108 (RTSLKIVNLRNSTLSSIGLETLMRH), 187–210 (LHDLGHLDLTSCVLANFSLEALGS), and 269–294 (LRHLTHLDISGTNLAGNGVATKESTT).

This sequence belongs to the zyg-11 family.

In terms of biological role, serves as substrate adapter subunit in an E3 ubiquitin ligase complex CG12084-cul-2-elongin BC. Targets substrates bearing N-terminal glycine degrons for proteasomal degradation. The chain is Protein zer-1 homolog from Drosophila melanogaster (Fruit fly).